Consider the following 456-residue polypeptide: Cysteine--tRNA ligase (456 aa).

Position 30 (Cys30) interacts with Zn(2+). A 'HIGH' region motif is present at residues 32–42 (MTVYDFCHIGH). Cys211, His236, and Glu240 together coordinate Zn(2+). The short motif at 268-272 (KMSKS) is the 'KMSKS' region element. Lys271 serves as a coordination point for ATP.

Belongs to the class-I aminoacyl-tRNA synthetase family. As to quaternary structure, monomer. It depends on Zn(2+) as a cofactor.

Its subcellular location is the cytoplasm. It catalyses the reaction tRNA(Cys) + L-cysteine + ATP = L-cysteinyl-tRNA(Cys) + AMP + diphosphate. This Dichelobacter nodosus (strain VCS1703A) protein is Cysteine--tRNA ligase.